The chain runs to 215 residues: MTLRSEILVNKNVLPTAEQALPGRETPMTLPETHFVNGNPLLGPFTSNVEFAIFGLGCFWGAERRLWQQEGVVSTVAGYAGGFTPNPTYEEVCSGLTGHTEVVLVVYEPEKISYDSLLKVFWEAHNPTQGMRQGNDIGTQYRSVIYCTTPEQLAAAKASADAFQAELSKAGLGGITTEIEEAPTVYFAETYHQQYLAKNPQGYCGLGGTGVCLPA.

C58 is an active-site residue.

It belongs to the MsrA Met sulfoxide reductase family.

The enzyme catalyses L-methionyl-[protein] + [thioredoxin]-disulfide + H2O = L-methionyl-(S)-S-oxide-[protein] + [thioredoxin]-dithiol. The catalysed reaction is [thioredoxin]-disulfide + L-methionine + H2O = L-methionine (S)-S-oxide + [thioredoxin]-dithiol. In terms of biological role, has an important function as a repair enzyme for proteins that have been inactivated by oxidation. Catalyzes the reversible oxidation-reduction of methionine sulfoxide in proteins to methionine. The protein is Peptide methionine sulfoxide reductase MsrA of Pseudomonas syringae pv. tomato (strain ATCC BAA-871 / DC3000).